We begin with the raw amino-acid sequence, 417 residues long: Multifunctional CCA protein (417 aa).

Gly8 and Arg11 together coordinate ATP. Residues Gly8 and Arg11 each coordinate CTP. Residues Asp21 and Asp23 each coordinate Mg(2+). Residues Arg91, Arg137, and Arg140 each contribute to the ATP site. Arg91, Arg137, and Arg140 together coordinate CTP. One can recognise an HD domain in the interval 225–326 (SGIHTLMTLQ…LNVLKKTDAF (102 aa)).

Belongs to the tRNA nucleotidyltransferase/poly(A) polymerase family. Bacterial CCA-adding enzyme type 1 subfamily. As to quaternary structure, monomer. Can also form homodimers and oligomers. Mg(2+) is required as a cofactor. Requires Ni(2+) as cofactor.

It carries out the reaction a tRNA precursor + 2 CTP + ATP = a tRNA with a 3' CCA end + 3 diphosphate. The enzyme catalyses a tRNA with a 3' CCA end + 2 CTP + ATP = a tRNA with a 3' CCACCA end + 3 diphosphate. In terms of biological role, catalyzes the addition and repair of the essential 3'-terminal CCA sequence in tRNAs without using a nucleic acid template. Adds these three nucleotides in the order of C, C, and A to the tRNA nucleotide-73, using CTP and ATP as substrates and producing inorganic pyrophosphate. tRNA 3'-terminal CCA addition is required both for tRNA processing and repair. Also involved in tRNA surveillance by mediating tandem CCA addition to generate a CCACCA at the 3' terminus of unstable tRNAs. While stable tRNAs receive only 3'-terminal CCA, unstable tRNAs are marked with CCACCA and rapidly degraded. The chain is Multifunctional CCA protein from Neisseria meningitidis serogroup A / serotype 4A (strain DSM 15465 / Z2491).